The primary structure comprises 501 residues: Aldehyde dehydrogenase, cytosolic 1 (501 aa).

Serine 2 carries the post-translational modification N-acetylserine. Residues lysine 91 and lysine 128 each carry the N6-acetyllysine modification. 246 to 251 serves as a coordination point for NAD(+); it reads GSTEVG. Lysine 252 bears the N6-acetyllysine mark. The Proton acceptor role is filled by glutamate 269. The active-site Nucleophile is the cysteine 303. Residues lysine 353, lysine 367, and lysine 410 each carry the N6-acetyllysine modification. Phosphoserine is present on serine 413. N6-acetyllysine is present on residues lysine 419, lysine 435, and lysine 495.

Belongs to the aldehyde dehydrogenase family. Homotetramer. In terms of tissue distribution, very low levels in lung and liver.

It is found in the cytoplasm. It carries out the reaction an aldehyde + NAD(+) + H2O = a carboxylate + NADH + 2 H(+). The protein operates within alcohol metabolism; ethanol degradation; acetate from ethanol: step 2/2. Can oxidize benzaldehyde, propionaldehyde and acetaldehyde. No detectable activity with retinal. The chain is Aldehyde dehydrogenase, cytosolic 1 (Aldh1a7) from Rattus norvegicus (Rat).